A 144-amino-acid polypeptide reads, in one-letter code: Flagellar assembly factor FliW (144 aa).

This sequence belongs to the FliW family. In terms of assembly, interacts with translational regulator CsrA and flagellin(s).

Its subcellular location is the cytoplasm. Functionally, acts as an anti-CsrA protein, binds CsrA and prevents it from repressing translation of its target genes, one of which is flagellin. Binds to flagellin and participates in the assembly of the flagellum. In Geobacillus kaustophilus (strain HTA426), this protein is Flagellar assembly factor FliW.